The sequence spans 118 residues: Ribonuclease P protein component (118 aa).

This sequence belongs to the RnpA family. As to quaternary structure, consists of a catalytic RNA component (M1 or rnpB) and a protein subunit.

The catalysed reaction is Endonucleolytic cleavage of RNA, removing 5'-extranucleotides from tRNA precursor.. RNaseP catalyzes the removal of the 5'-leader sequence from pre-tRNA to produce the mature 5'-terminus. It can also cleave other RNA substrates such as 4.5S RNA. The protein component plays an auxiliary but essential role in vivo by binding to the 5'-leader sequence and broadening the substrate specificity of the ribozyme. The protein is Ribonuclease P protein component of Rickettsia akari (strain Hartford).